The primary structure comprises 490 residues: GTPase Der (490 aa).

2 EngA-type G domains span residues 3–166 (PVVA…MEDL) and 203–376 (IKLA…DSST). GTP is bound by residues 9-16 (GRPNVGKS), 56-60 (DTGGI), 118-121 (NKTD), 209-216 (GRPNVGKS), 256-260 (DTAGV), and 321-324 (NKWD). The region spanning 377–461 (RRVGTSMLTR…PIRIQFKEGE (85 aa)) is the KH-like domain.

The protein belongs to the TRAFAC class TrmE-Era-EngA-EngB-Septin-like GTPase superfamily. EngA (Der) GTPase family. As to quaternary structure, associates with the 50S ribosomal subunit.

In terms of biological role, GTPase that plays an essential role in the late steps of ribosome biogenesis. This is GTPase Der from Escherichia coli O127:H6 (strain E2348/69 / EPEC).